A 732-amino-acid chain; its full sequence is Elongation factor 2 (732 aa).

A tr-type G domain is found at 19–230 (ERIRNMGIAA…VSFKDIVELT (212 aa)). GTP-binding positions include 28–35 (AHIDHGKT), 94–98 (DTPGH), and 148–151 (NKVD). H597 bears the Diphthamide mark.

It belongs to the TRAFAC class translation factor GTPase superfamily. Classic translation factor GTPase family. EF-G/EF-2 subfamily.

The protein resides in the cytoplasm. Its function is as follows. Catalyzes the GTP-dependent ribosomal translocation step during translation elongation. During this step, the ribosome changes from the pre-translocational (PRE) to the post-translocational (POST) state as the newly formed A-site-bound peptidyl-tRNA and P-site-bound deacylated tRNA move to the P and E sites, respectively. Catalyzes the coordinated movement of the two tRNA molecules, the mRNA and conformational changes in the ribosome. The chain is Elongation factor 2 from Thermococcus gammatolerans (strain DSM 15229 / JCM 11827 / EJ3).